The following is a 340-amino-acid chain: MLTQLKAKSEGKLAKQICKVVLDHFEKQYSKELGDAWNTVREILTSPSCWQYAVLLNRFNYPFELEKDLHLKGYHTLSQGSLPNYPKSVKCYLSRTPGRIPSERHQIGNLKKYYLLNAASLLPVLALELRDGEKVLDLCAAPGGKSIALLQCACPGYLHCNEYDSLRLRWLRQTLESFIPQPLINVIKVSELDGRKMGDAQPEMFDKVLVDAPCSNDRSWLFSSDSQKASCRISQRRNLPLLQIELLRSAIKALRPGGILVYSTCTLSKAENQDVISEILNSHGNIMPMDIKGIARTCSHDFTFAPTGQECGLLVIPDKGKAWGPMYVAKLKKSWSTGKW.

S-adenosyl-L-methionine-binding positions include 139-145 (CAAPGGK), Glu-162, Asp-193, and Asp-211. The active-site Nucleophile is the Cys-265.

The protein belongs to the class I-like SAM-binding methyltransferase superfamily. RsmB/NOP family.

It localises to the mitochondrion matrix. The catalysed reaction is cytidine(34) in mitochondrial tRNA + S-adenosyl-L-methionine = 5-methylcytidine(34) in mitochondrial tRNA + S-adenosyl-L-homocysteine + H(+). Mitochondrial tRNA methyltransferase that mediates methylation of cytosine to 5-methylcytosine (m5C) at position 34 of mt-tRNA(Met). mt-tRNA(Met) methylation at cytosine(34) takes place at the wobble position of the anticodon and initiates the formation of 5-formylcytosine (f(5)c) at this position. mt-tRNA(Met) containing the f(5)c modification at the wobble position enables recognition of the AUA codon in addition to the AUG codon, expanding codon recognition in mitochondrial translation. This is tRNA (cytosine(34)-C(5))-methyltransferase, mitochondrial from Homo sapiens (Human).